A 445-amino-acid polypeptide reads, in one-letter code: Probable glycine dehydrogenase (decarboxylating) subunit 1 (445 aa).

This sequence belongs to the GcvP family. N-terminal subunit subfamily. As to quaternary structure, the glycine cleavage system is composed of four proteins: P, T, L and H. In this organism, the P 'protein' is a heterodimer of two subunits.

It catalyses the reaction N(6)-[(R)-lipoyl]-L-lysyl-[glycine-cleavage complex H protein] + glycine + H(+) = N(6)-[(R)-S(8)-aminomethyldihydrolipoyl]-L-lysyl-[glycine-cleavage complex H protein] + CO2. Functionally, the glycine cleavage system catalyzes the degradation of glycine. The P protein binds the alpha-amino group of glycine through its pyridoxal phosphate cofactor; CO(2) is released and the remaining methylamine moiety is then transferred to the lipoamide cofactor of the H protein. In Citrifermentans bemidjiense (strain ATCC BAA-1014 / DSM 16622 / JCM 12645 / Bem) (Geobacter bemidjiensis), this protein is Probable glycine dehydrogenase (decarboxylating) subunit 1.